A 461-amino-acid chain; its full sequence is Lysosomal proton-coupled steroid conjugate and bile acid symporter SLC46A3 (461 aa).

Residues 1–25 (MKILFVEPAIFLSAFAMTLTGPLTT) form the signal peptide. The Extracellular portion of the chain corresponds to 26–73 (QYVYRRIWEETGNYTFSSDSNISECEKNKSSPIFAFQEEVQKKVSRFN). Asn-38, Asn-46, and Asn-53 each carry an N-linked (GlcNAc...) asparagine glycan. Residues 74–94 (LQMDISGLIPGLVSTFILLSI) form a helical membrane-spanning segment. The Cytoplasmic portion of the chain corresponds to 95–101 (SDHYGRK). The chain crosses the membrane as a helical span at residues 102-124 (FPMILSSVGALATSVWLCLLCYF). At 125-133 (AFPFQLLIA) the chain is on the extracellular side. A helical transmembrane segment spans residues 134–156 (STFIGAFCGNYTTFWGACFAYIV). At 157-170 (DQCKEHKQKTIRIA) the chain is on the cytoplasmic side. A helical transmembrane segment spans residues 171–191 (IIDFLLGLVTGLTGLSSGYFI). At 192–197 (RELGFE) the chain is on the extracellular side. Residues 198–218 (WSFLIIAVSLAVNLIYILFFL) form a helical membrane-spanning segment. The Cytoplasmic portion of the chain corresponds to 219–261 (GDPVKECSSQNVTMSCSEGFKNLFYRTYMLFKNASGKRRFLLC). A helical transmembrane segment spans residues 262–282 (LLLFTVITYFFVVIGIAPIFI). At 283–294 (LYELDSPLCWNE) the chain is on the extracellular side. A helical membrane pass occupies residues 295 to 315 (VFIGYGSALGSASFLTSFLGI). The Cytoplasmic segment spans residues 316–324 (WLFSYCMED). Residues 325-345 (IHMAFIGIFTTMTGMAMTAFA) form a helical membrane-spanning segment. Over 346–347 (ST) the chain is Extracellular. The helical transmembrane segment at 348-368 (TLMMFLARVPFLFTIVPFSVL) threads the bilayer. Topologically, residues 369–382 (RSMLSKVVRSTEQG) are cytoplasmic. The chain crosses the membrane as a helical span at residues 383 to 403 (TLFACIAFLETLGGVTAVSTF). Residues 404 to 415 (NGIYSATVAWYP) lie on the Extracellular side of the membrane. The helical transmembrane segment at 416–436 (GFTFLLSAGLLLLPAISLCVV) threads the bilayer. Topologically, residues 437–461 (KCTSWNEGSYELLIQEESSEDASDR) are cytoplasmic. A Tyrosine-based lysosomal-sorting motif motif is present at residues 446 to 449 (YELL).

Belongs to the major facilitator superfamily. SLC46A family.

The protein localises to the lysosome membrane. It catalyses the reaction estrone 3-sulfate(out) + n H(+)(out) = estrone 3-sulfate(in) + n H(+)(in). It carries out the reaction 25-hydroxyvitamin D3 sulfate(out) + n H(+)(out) = 25-hydroxyvitamin D3 sulfate(in) + n H(+)(in). The enzyme catalyses cholate(out) + n H(+)(out) = cholate(in) + n H(+)(in). The catalysed reaction is glycocholate(out) + n H(+)(out) = glycocholate(in) + n H(+)(in). It catalyses the reaction taurocholate(out) + n H(+)(out) = taurocholate(in) + n H(+)(in). It carries out the reaction dehydroepiandrosterone 3-sulfate(out) + n H(+)(out) = dehydroepiandrosterone 3-sulfate(in) + n H(+)(in). The enzyme catalyses N-acetyl-D-muramoyl-L-alanyl-D-isoglutamine(out) + n H(+)(out) = N-acetyl-D-muramoyl-L-alanyl-D-isoglutamine(in) + n H(+)(in). The catalysed reaction is 2',3'-cGAMP(out) + n H(+)(out) = 2',3'-cGAMP(in) + n H(+)(in). Functionally, lysosomal proton-coupled steroid conjugate and bile acid transporter. Preferentially recognizes lipophilic steroid conjugates or bile acis as endogenous substrates and seems to mediate escape from lysosomes to the cytoplasm. Modulates hepatic cytosolic copper homeostasis, maybe acting as a lysosomal copper transporter and sequestering copper ions in the lysosome. Transports catabolites of non-cleavable antibody-drug conjugates from the lysosome to the cytoplasm. Delivers pathogen-associated molecular patterns to cytosolic pattern recognition receptors as part of the innate immune response to microbes. Selectively transports bacterial muramyl dipeptide (MDP) into the cytosol for recognition by NOD2, triggering inflammatory responses. Likely acts as a redundant importer of cyclic GMP-AMP dinucleotides (cGAMPs) in monocyte and macrophage cell lineages. The transport mechanism, its electrogenicity and stoichiometry remain to be elucidated. The chain is Lysosomal proton-coupled steroid conjugate and bile acid symporter SLC46A3 from Homo sapiens (Human).